Here is a 473-residue protein sequence, read N- to C-terminus: Glutamate--tRNA ligase (473 aa).

The 'HIGH' region signature appears at 10-20; the sequence is PSPTGYLHLGN. Cys-98, Cys-100, Cys-125, and His-127 together coordinate Zn(2+). The short motif at 242 to 246 is the 'KMSKS' region element; sequence KLSKR. Lys-245 contacts ATP.

The protein belongs to the class-I aminoacyl-tRNA synthetase family. Glutamate--tRNA ligase type 1 subfamily. As to quaternary structure, monomer. Zn(2+) is required as a cofactor.

The protein resides in the cytoplasm. It carries out the reaction tRNA(Glu) + L-glutamate + ATP = L-glutamyl-tRNA(Glu) + AMP + diphosphate. Catalyzes the attachment of glutamate to tRNA(Glu) in a two-step reaction: glutamate is first activated by ATP to form Glu-AMP and then transferred to the acceptor end of tRNA(Glu). This is Glutamate--tRNA ligase from Aquifex aeolicus (strain VF5).